We begin with the raw amino-acid sequence, 137 residues long: uncharacterized protein (137 aa).

The protein belongs to the ycf72 family.

It localises to the plastid. It is found in the chloroplast. This is an uncharacterized protein from Zea mays (Maize).